We begin with the raw amino-acid sequence, 317 residues long: CXXC-type zinc finger protein 5 (317 aa).

Over residues 1–10 the composition is skewed to gly residues; that stretch reads MSSLGGGSQD. Positions 1–92 are disordered; it reads MSSLGGGSQD…SFGSSGGGGS (92 aa). 2 stretches are compositionally biased toward low complexity: residues 11–27 and 36–51; these read AGGS…SGSG and STAV…VADD. The CXXC-type zinc finger occupies 251–292; sequence GKKKRKRCGMCAPCRRRINCEQCSSCRNRKTGHQICKFRKCE. Positions 252 to 257 match the Nuclear localization signal motif; sequence KKKRKR. Cys258, Cys261, Cys264, Cys270, Cys273, Cys276, Cys286, and Cys291 together coordinate Zn(2+).

As to quaternary structure, interacts with DVL1. Interacts with RBPJ.

Its subcellular location is the nucleus. It localises to the cytoplasm. Its function is as follows. May indirectly participate in activation of the NF-kappa-B and MAPK pathways. Acts as a mediator of BMP4-mediated modulation of canonical Wnt signaling activity in neural stem cells. Required for DNA damage-induced ATM phosphorylation, p53 activation and cell cycle arrest. Involved in myelopoiesis. Binds to the oxygen responsive element of COX4I2 and represses its transcription under hypoxia conditions (4% oxygen), as well as normoxia conditions (20% oxygen). May repress COX4I2 transactivation induced by CHCHD2 and RBPJ. Binds preferentially to DNA containing cytidine-phosphate-guanosine (CpG) dinucleotides over CpH (H=A, T, and C), hemimethylated-CpG and hemimethylated-hydroxymethyl-CpG. In Mus musculus (Mouse), this protein is CXXC-type zinc finger protein 5 (Cxxc5).